The following is a 286-amino-acid chain: Non-homologous end joining protein Ku (286 aa).

Residues 10–175 (TVGLVSFPVR…EEVREPDFVV (166 aa)) form the Ku domain. Over residues 226–242 (ERQERQRREAGEVRQAD) the composition is skewed to basic and acidic residues. The segment at 226 to 270 (ERQERQRREAGEVRQADETDEAAETEVPEVDIPASRAPGETGGEL) is disordered. Residues 243–254 (ETDEAAETEVPE) are compositionally biased toward acidic residues.

This sequence belongs to the prokaryotic Ku family. As to quaternary structure, homodimer. Interacts with LigD.

Functionally, with LigD forms a non-homologous end joining (NHEJ) DNA repair enzyme, which repairs dsDNA breaks with reduced fidelity. Binds linear dsDNA with 5'- and 3'- overhangs but not closed circular dsDNA nor ssDNA. Recruits and stimulates the ligase activity of LigD. This is Non-homologous end joining protein Ku from Actinosynnema mirum (strain ATCC 29888 / DSM 43827 / JCM 3225 / NBRC 14064 / NCIMB 13271 / NRRL B-12336 / IMRU 3971 / 101).